A 645-amino-acid polypeptide reads, in one-letter code: Acetyl-coenzyme A synthetase (645 aa).

CoA contacts are provided by residues 190 to 193 and Thr-308; that span reads RGGR. ATP contacts are provided by residues 384 to 386, 408 to 413, Asp-497, and Arg-512; these read GEP and DTWWQT. Ser-520 lines the CoA pocket. Arg-523 serves as a coordination point for ATP. Positions 534, 536, and 539 each coordinate Mg(2+). Lys-606 is subject to N6-acetyllysine.

This sequence belongs to the ATP-dependent AMP-binding enzyme family. It depends on Mg(2+) as a cofactor. Post-translationally, acetylated. Deacetylation by the SIR2-homolog deacetylase activates the enzyme.

It catalyses the reaction acetate + ATP + CoA = acetyl-CoA + AMP + diphosphate. In terms of biological role, catalyzes the conversion of acetate into acetyl-CoA (AcCoA), an essential intermediate at the junction of anabolic and catabolic pathways. AcsA undergoes a two-step reaction. In the first half reaction, AcsA combines acetate with ATP to form acetyl-adenylate (AcAMP) intermediate. In the second half reaction, it can then transfer the acetyl group from AcAMP to the sulfhydryl group of CoA, forming the product AcCoA. This is Acetyl-coenzyme A synthetase from Saccharophagus degradans (strain 2-40 / ATCC 43961 / DSM 17024).